The sequence spans 250 residues: Small ribosomal subunit protein uS3 (250 aa).

A KH type-2 domain is found at 39–111 (IRQLINNFSK…DINLNILEVK (73 aa)).

The protein belongs to the universal ribosomal protein uS3 family. Part of the 30S ribosomal subunit. Forms a tight complex with proteins S10 and S14.

Its function is as follows. Binds the lower part of the 30S subunit head. Binds mRNA in the 70S ribosome, positioning it for translation. The protein is Small ribosomal subunit protein uS3 of Phytoplasma australiense.